A 360-amino-acid polypeptide reads, in one-letter code: MIKLNVNLQDRSYPIYISTDYSQIGKCIQSAKLTGKMVLITDTNVDKYQAEECVKAFSDAGYEVSKFVIPAGEENKNLDTTRDIYKYLLGLKLDRSATLMALGGGVVGDITGFAAATFLRGINFVQIPTTLLAQSDSSVGGKVGVDFEGTKNIIGAFYQPKFVYINVNTLKTLPERELKAGLAEVVKHGVIMDEEFYEYIDYNVHKILNHDEAVLQYIAKRNCSIKASVVEKDEKEGGLRAILNFGHTIGHAIETVMNFELLHGECVSLGMVGAMRMALYLEMIDEQSVNRVKNTLDKIGLPTRLEGIDVDKVYNQMFYDKKIKGSKLTFVLPRKRIGEVIQCTIDDEDLIKRVIASLGE.

Residues Gly105 to Asp109, Thr129 to Thr130, Lys142, Lys151, and Thr169 to Thr172 each bind NAD(+). Zn(2+) is bound by residues Glu184, His247, and His263.

It belongs to the sugar phosphate cyclases superfamily. Dehydroquinate synthase family. Requires Co(2+) as cofactor. It depends on Zn(2+) as a cofactor. NAD(+) is required as a cofactor.

Its subcellular location is the cytoplasm. It carries out the reaction 7-phospho-2-dehydro-3-deoxy-D-arabino-heptonate = 3-dehydroquinate + phosphate. The protein operates within metabolic intermediate biosynthesis; chorismate biosynthesis; chorismate from D-erythrose 4-phosphate and phosphoenolpyruvate: step 2/7. Its function is as follows. Catalyzes the conversion of 3-deoxy-D-arabino-heptulosonate 7-phosphate (DAHP) to dehydroquinate (DHQ). The protein is 3-dehydroquinate synthase of Acetivibrio thermocellus (strain ATCC 27405 / DSM 1237 / JCM 9322 / NBRC 103400 / NCIMB 10682 / NRRL B-4536 / VPI 7372) (Clostridium thermocellum).